Consider the following 670-residue polypeptide: E3 ubiquitin-protein ligase MAG2 (670 aa).

2 disordered regions span residues 1 to 84 and 124 to 145; these read MVEP…TSTR and EVER…RDEH. The span at 20 to 39 shows a compositional bias: polar residues; the sequence is DTLNATSNSSKQGVSNNKRN. The segment covering 51 to 66 has biased composition (basic and acidic residues); sequence SDGRDNAHNYHGEGRR. The RING-type zinc finger occupies 195–250; that stretch reads CSICLSEEPVAPRMVTCGHIFCLSCLLNFFSIEETVKNKETGYSKKKKYKECPLCG. The tract at residues 609 to 670 is disordered; that stretch reads TEDEKASKEN…LFSSNHQALG (62 aa). Over residues 610–622 the composition is skewed to basic and acidic residues; the sequence is EDEKASKENKEFQ. Residues 637 to 649 show a composition bias toward low complexity; it reads VTDSTDSPPTSNG.

This sequence belongs to the RNF10 family.

It is found in the cytoplasm. It catalyses the reaction S-ubiquitinyl-[E2 ubiquitin-conjugating enzyme]-L-cysteine + [acceptor protein]-L-lysine = [E2 ubiquitin-conjugating enzyme]-L-cysteine + N(6)-ubiquitinyl-[acceptor protein]-L-lysine.. The protein operates within protein modification; protein ubiquitination. Functionally, E3 ubiquitin-protein ligase involved in the degradation of non-functional 18S rRNAs in response to stalled ribosomes. Catalyzes monoubiquitination of RPS3/uS3 in response to stalled ribosomes, initiating a HEL2-dependent response that activates the degradation of non-functional 18S rRNAs. In Saccharomyces cerevisiae (strain ATCC 204508 / S288c) (Baker's yeast), this protein is E3 ubiquitin-protein ligase MAG2.